Reading from the N-terminus, the 682-residue chain is DNA-directed RNA polymerase subunit beta' (682 aa).

Zn(2+) contacts are provided by Cys-69, Cys-71, Cys-87, and Cys-90. Positions 489, 491, and 493 each coordinate Mg(2+).

The protein belongs to the RNA polymerase beta' chain family. RpoC1 subfamily. In plastids the minimal PEP RNA polymerase catalytic core is composed of four subunits: alpha, beta, beta', and beta''. When a (nuclear-encoded) sigma factor is associated with the core the holoenzyme is formed, which can initiate transcription. Mg(2+) serves as cofactor. Requires Zn(2+) as cofactor.

The protein resides in the plastid. It is found in the chloroplast. The catalysed reaction is RNA(n) + a ribonucleoside 5'-triphosphate = RNA(n+1) + diphosphate. Its function is as follows. DNA-dependent RNA polymerase catalyzes the transcription of DNA into RNA using the four ribonucleoside triphosphates as substrates. This chain is DNA-directed RNA polymerase subunit beta', found in Oryza nivara (Indian wild rice).